The following is a 207-amino-acid chain: Thiamine-phosphate synthase (207 aa).

4-amino-2-methyl-5-(diphosphooxymethyl)pyrimidine-binding positions include 38-42 (QYRNK) and Asn70. Mg(2+)-binding residues include Asp71 and Asp90. Ser109 serves as a coordination point for 4-amino-2-methyl-5-(diphosphooxymethyl)pyrimidine. 136–138 (TAT) is a binding site for 2-[(2R,5Z)-2-carboxy-4-methylthiazol-5(2H)-ylidene]ethyl phosphate. A 4-amino-2-methyl-5-(diphosphooxymethyl)pyrimidine-binding site is contributed by Lys139. 2-[(2R,5Z)-2-carboxy-4-methylthiazol-5(2H)-ylidene]ethyl phosphate-binding positions include Gly165 and 185–186 (VS).

Belongs to the thiamine-phosphate synthase family. Mg(2+) serves as cofactor.

The catalysed reaction is 2-[(2R,5Z)-2-carboxy-4-methylthiazol-5(2H)-ylidene]ethyl phosphate + 4-amino-2-methyl-5-(diphosphooxymethyl)pyrimidine + 2 H(+) = thiamine phosphate + CO2 + diphosphate. It catalyses the reaction 2-(2-carboxy-4-methylthiazol-5-yl)ethyl phosphate + 4-amino-2-methyl-5-(diphosphooxymethyl)pyrimidine + 2 H(+) = thiamine phosphate + CO2 + diphosphate. It carries out the reaction 4-methyl-5-(2-phosphooxyethyl)-thiazole + 4-amino-2-methyl-5-(diphosphooxymethyl)pyrimidine + H(+) = thiamine phosphate + diphosphate. The protein operates within cofactor biosynthesis; thiamine diphosphate biosynthesis; thiamine phosphate from 4-amino-2-methyl-5-diphosphomethylpyrimidine and 4-methyl-5-(2-phosphoethyl)-thiazole: step 1/1. Its function is as follows. Condenses 4-methyl-5-(beta-hydroxyethyl)thiazole monophosphate (THZ-P) and 2-methyl-4-amino-5-hydroxymethyl pyrimidine pyrophosphate (HMP-PP) to form thiamine monophosphate (TMP). The polypeptide is Thiamine-phosphate synthase (Xanthomonas campestris pv. campestris (strain 8004)).